The sequence spans 281 residues: Pantothenate synthetase (281 aa).

An ATP-binding site is contributed by 26-33 (MGYLHQGH). H33 acts as the Proton donor in catalysis. Q57 provides a ligand contact to (R)-pantoate. Q57 lines the beta-alanine pocket. 143–146 (GQKD) lines the ATP pocket. A (R)-pantoate-binding site is contributed by Q149. Residues V172 and 180–183 (LSSR) contribute to the ATP site.

Belongs to the pantothenate synthetase family. In terms of assembly, homodimer.

The protein resides in the cytoplasm. The enzyme catalyses (R)-pantoate + beta-alanine + ATP = (R)-pantothenate + AMP + diphosphate + H(+). It participates in cofactor biosynthesis; (R)-pantothenate biosynthesis; (R)-pantothenate from (R)-pantoate and beta-alanine: step 1/1. Functionally, catalyzes the condensation of pantoate with beta-alanine in an ATP-dependent reaction via a pantoyl-adenylate intermediate. This is Pantothenate synthetase from Chloroflexus aurantiacus (strain ATCC 29366 / DSM 635 / J-10-fl).